Consider the following 301-residue polypeptide: MDNVANNDVDVLEKQAAFLSSALPYMQKYENETVVIKYGGHAMGNLALGQAFARDIALLKQSGVNPIVVHGGGPRIAETLKKMGIESRFESGLRVTDEKIVEVVEMVLAGSINKEIVALINAEGEWAIGLCGKDGNMVFAEKVHKTVIDPNSNSERVLDLGFVGEPVEIDRTLLDFLACSEMIPVIAPIAPGRDGKTYNINADIFAGAIAGALEAKRLLFLTDVPGVLDKEGKVLKELTVTEAKNLIKDGTISGGMIPKVETCINAIQGGVEGVVILNGKTSHPVLLELFTEHGAGTLIIS.

Residues 72–73, Arg-94, and Asn-199 contribute to the substrate site; that span reads GG.

It belongs to the acetylglutamate kinase family. ArgB subfamily.

The protein localises to the cytoplasm. It catalyses the reaction N-acetyl-L-glutamate + ATP = N-acetyl-L-glutamyl 5-phosphate + ADP. Its pathway is amino-acid biosynthesis; L-arginine biosynthesis; N(2)-acetyl-L-ornithine from L-glutamate: step 2/4. Its function is as follows. Catalyzes the ATP-dependent phosphorylation of N-acetyl-L-glutamate. This is Acetylglutamate kinase from Bartonella bacilliformis (strain ATCC 35685 / KC583 / Herrer 020/F12,63).